Here is a 472-residue protein sequence, read N- to C-terminus: Transmembrane protein 8B (472 aa).

The segment at 1-37 (MNMPQSLGNQPLPPEPPSLRTPAEGPGATSPPEHCWP) is disordered. The Extracellular portion of the chain corresponds to 1-233 (MNMPQSLGNQ…ADALTYGFQL (233 aa)). N-linked (GlcNAc...) asparagine glycans are attached at residues Asn-92 and Asn-100. The 40-residue stretch at 182 to 221 (FLSPCVDDCGPYGQCKLLRTHNYLYAACECKAGWRGWGCT) folds into the EGF-like domain. Intrachain disulfides connect Cys-186–Cys-196, Cys-190–Cys-209, and Cys-211–Cys-220. Residues 234-254 (LSTLLLCLSNLMFLPPVVLAI) form a helical membrane-spanning segment. The Cytoplasmic segment spans residues 255–257 (RSR). A helical membrane pass occupies residues 258–277 (YVLEAAVYTFTMFFSTFYHA). The Extracellular portion of the chain corresponds to 278 to 292 (CDQPGIVVFCIMDYD). Residues 293-313 (VLQFCDFLGSLMSVWVTVIAM) form a helical membrane-spanning segment. The Cytoplasmic segment spans residues 314 to 315 (AR). Residues 316–336 (LQPVVKQVLYLLGAMLLSMAL) form a helical membrane-spanning segment. At 337–342 (QLDRHG) the chain is on the extracellular side. The chain crosses the membrane as a helical span at residues 343–363 (LWNLLGPSLFALGILATAWTV). Over 364–379 (RSVRRRHCYPPTWRRW) the chain is Cytoplasmic. The chain crosses the membrane as a helical span at residues 380 to 400 (LFCLCPGSLIAGSAILLYAFV). Topologically, residues 401–405 (ETRDN) are extracellular. A helical transmembrane segment spans residues 406–426 (YFYIHSIWHMLIAGSVGFLLP). Residues 427–472 (PRAKTDRRVPSGARARGCGYQLCINEQEELGLVGPGGATVSSICAS) are Cytoplasmic-facing.

This sequence belongs to the TMEM8 family. May interact with EZR. Post-translationally, N-glycosylated.

The protein localises to the cell membrane. It localises to the cytoplasm. It is found in the nucleus. Its subcellular location is the mitochondrion. The protein resides in the endoplasmic reticulum. Functionally, may function as a regulator of the EGFR pathway. Probable tumor suppressor which may function in cell growth, proliferation and adhesion. This Bos taurus (Bovine) protein is Transmembrane protein 8B (TMEM8B).